Reading from the N-terminus, the 243-residue chain is MPTLEMPVAAVLDSTVGSSEALPDFTSDRYKDAYSRINAIVIEGEQEAHDNYIAIGTLLPDHVEELKRLAKMEMRHKKGFTACGKNLGVEADMDFAREFFAPLRDNFQTALGQGKTPTCLLIQALLIEAFAISAYHTYIPVSDPFARKITEGVVKDEYTHLNYGEAWLKANLESCREELLEANRENLPLIRRMLDQVAGDAAVLQMDKEDLIEDFLIAYQESLTEIGFNTREITRMAAAALVS.

Residues Glu-45, Glu-73, His-76, Glu-128, and His-160 each contribute to the Fe cation site.

The protein belongs to the aldehyde decarbonylase family. Requires Binds 2 metal cations per subunit. The catalytic dinuclear metal-binding site could be either a di-iron or a manganese-iron cofactor. as cofactor.

The enzyme catalyses a long-chain fatty aldehyde + 2 NADPH + O2 + H(+) = a long-chain alkane + formate + 2 NADP(+) + H2O. Functionally, catalyzes the decarbonylation of fatty aldehydes to alkanes. Requires the presence of ferredoxin, ferredoxin reductase and NADPH for in vitro decarbonylase activity. Involved in the biosynthesis of alkanes, mainly heptadecane and pentadecane. In Prochlorococcus marinus (strain MIT 9313), this protein is Aldehyde decarbonylase.